The primary structure comprises 81 residues: MSHTVKIYDTCIGCTQCVRACPTDVLEMVPWDGCKAQQIASSPRTEDCVGCKRCETACPTDFLSIRVYLGAETTRSMGLAY.

4Fe-4S ferredoxin-type domains lie at 2–31 (SHTVKIYDTCIGCTQCVRACPTDVLEMVPW) and 39–68 (IASSPRTEDCVGCKRCETACPTDFLSIRVY). [4Fe-4S] cluster is bound by residues cysteine 11, cysteine 14, cysteine 17, cysteine 21, cysteine 48, cysteine 51, cysteine 54, and cysteine 58.

As to quaternary structure, the cyanobacterial PSI reaction center is composed of one copy each of PsaA,B,C,D,E,F,I,J,K,L,M and X, and forms trimeric complexes. [4Fe-4S] cluster serves as cofactor.

It localises to the cellular thylakoid membrane. The enzyme catalyses reduced [plastocyanin] + hnu + oxidized [2Fe-2S]-[ferredoxin] = oxidized [plastocyanin] + reduced [2Fe-2S]-[ferredoxin]. In terms of biological role, apoprotein for the two 4Fe-4S centers FA and FB of photosystem I (PSI); essential for photochemical activity. FB is the terminal electron acceptor of PSI, donating electrons to ferredoxin. The C-terminus interacts with PsaA/B/D and helps assemble the protein into the PSI complex. Required for binding of PsaD and PsaE to PSI. PSI is a plastocyanin/cytochrome c6-ferredoxin oxidoreductase, converting photonic excitation into a charge separation, which transfers an electron from the donor P700 chlorophyll pair to the spectroscopically characterized acceptors A0, A1, FX, FA and FB in turn. The sequence is that of Photosystem I iron-sulfur center from Mastigocladus laminosus (Fischerella sp.).